Consider the following 144-residue polypeptide: 3-dehydroquinate dehydratase (144 aa).

Tyrosine 22 serves as the catalytic Proton acceptor. Residues asparagine 73, histidine 79, and aspartate 86 each contribute to the substrate site. The Proton donor role is filled by histidine 99. Residues 100–101 and arginine 110 contribute to the substrate site; that span reads IS.

Belongs to the type-II 3-dehydroquinase family. Homododecamer.

It catalyses the reaction 3-dehydroquinate = 3-dehydroshikimate + H2O. It functions in the pathway metabolic intermediate biosynthesis; chorismate biosynthesis; chorismate from D-erythrose 4-phosphate and phosphoenolpyruvate: step 3/7. Catalyzes a trans-dehydration via an enolate intermediate. The polypeptide is 3-dehydroquinate dehydratase (Mycobacteroides abscessus (strain ATCC 19977 / DSM 44196 / CCUG 20993 / CIP 104536 / JCM 13569 / NCTC 13031 / TMC 1543 / L948) (Mycobacterium abscessus)).